A 154-amino-acid chain; its full sequence is Low molecular weight protein-tyrosine-phosphatase PtpA (154 aa).

Cys8 serves as the catalytic Nucleophile. Arg14 is a catalytic residue. Asp120 (proton donor) is an active-site residue.

Belongs to the low molecular weight phosphotyrosine protein phosphatase family.

The enzyme catalyses O-phospho-L-tyrosyl-[protein] + H2O = L-tyrosyl-[protein] + phosphate. Functionally, dephosphorylates the phosphotyrosine-containing proteins. This chain is Low molecular weight protein-tyrosine-phosphatase PtpA (ptpA), found in Staphylococcus haemolyticus (strain JCSC1435).